Reading from the N-terminus, the 516-residue chain is Ribose import ATP-binding protein RbsA (516 aa).

2 consecutive ABC transporter domains span residues 14 to 250 (LRLT…VGRA) and 261 to 504 (AKGA…AGIG). 46–53 (GENGAGKS) contributes to the ATP binding site.

Belongs to the ABC transporter superfamily. Ribose importer (TC 3.A.1.2.1) family. As to quaternary structure, the complex is composed of an ATP-binding protein (RbsA), two transmembrane proteins (RbsC) and a solute-binding protein (RbsB).

The protein localises to the cell inner membrane. It catalyses the reaction D-ribose(out) + ATP + H2O = D-ribose(in) + ADP + phosphate + H(+). In terms of biological role, part of the ABC transporter complex RbsABC involved in ribose import. Responsible for energy coupling to the transport system. The sequence is that of Ribose import ATP-binding protein RbsA from Jannaschia sp. (strain CCS1).